Here is a 914-residue protein sequence, read N- to C-terminus: MAENSVLTSTTGRTSLADSSIFDSKVTEISKENLLIGSTSYVEEEMPQIETRVILVQEAGKQEELIKALKTIKIMEVPVIKIKESCPGKSDEKLIKSVINMDIKVGFVKMESVEEFEGLDSPEFENVFVVTDFQDSVFNDLYKADCRVIGPPVVLNCSQKGEPLPFSCRPLYCTSMMNLVLCFTGFRKKEELVRLVTLVHHMGGVIRKDFNSKVTHLVANCTQGEKFRVAVSLGTPIMKPEWIYKAWERRNEQDFYAAVDDFRNEFKVPPFQDCILSFLGFSDEEKTNMEEMTEMQGGKYLPLGDERCTHLVVEENIVKDLPFEPSKKLYVVKQEWFWGSIQMDARAGETMYLYEKANTPELKKSVSMLSLNTPNSNRKRRRLKETLAQLSRETDVSPFPPRKRPSAEHSLSIGSLLDISNTPESSINYGDTPKSCTKSSKSSTPVPSKQSARWQVAKELYQTESNYVNILATIIQLFQVPLEEEGQRGGPILAPEEIKTIFGSIPDIFDVHTKIKDDLEDLIVNWDESKSIGDIFLKYSKDLVKTYPPFVNFFEMSKETIIKCEKQKPRFHAFLKINQAKPECGRQSLVELLIRPVQRLPSVALLLNDLKKHTADENPDKSTLEKAIGSLKEVMTHINEDKRKTEAQKQIFDVVYEVDGCPANLLSSHRSLVQRVETISLGEHPCDRGEQVTLFLFNDCLEIARKRHKVIGTFRSPHGQTRPPASLKHIHLMPLSQIKKVLDIRETEDCHNAFALLVRPPTEQANVLLSFQMTSDELPKENWLKMLCRHVANTICKADAENLIYTADPESFEVNTKDMDSTLSRASRAIKKTSKKVTRAFSFSKTPKRALRRALMTSHGSVEGRSPSSNDKHVMSRLSSTSSLAGIPSPSLVSLPSFFERRSHTLSRSTTHLI.

Residue A2 is modified to N-acetylalanine. BRCT domains are found at residues 171–260 (LYCT…AAVD) and 266–354 (FKVP…MYLY). T359 carries the phosphothreonine; by PKC/PRKCI modification. Phosphoserine is present on residues S367 and S370. T373 bears the Phosphothreonine; by CDK1 mark. S376 carries the phosphoserine modification. 2 consecutive short sequence motifs (nuclear localization signal) follow at residues 378–382 (RKRRR) and 401–405 (PRKRP). Residues 388–449 (AQLSRETDVS…SKSSTPVPSK (62 aa)) are disordered. Residues 418-429 (DISNTPESSINY) are compositionally biased toward polar residues. Residues 432–449 (TPKSCTKSSKSSTPVPSK) show a composition bias toward low complexity. The residue at position 444 (T444) is a Phosphothreonine; by CDK1. The region spanning 452–641 (ARWQVAKELY…KEVMTHINED (190 aa)) is the DH domain. Residue K611 forms a Glycyl lysine isopeptide (Lys-Gly) (interchain with G-Cter in SUMO2) linkage. The PH domain occupies 675-794 (RVETISLGEH…KMLCRHVANT (120 aa)). Phosphoserine occurs at positions 716 and 842. T846 is subject to Phosphothreonine; by CDK1. The tract at residues 857 to 884 (TSHGSVEGRSPSSNDKHVMSRLSSTSSL) is disordered. Phosphoserine is present on residues S861 and S866.

As to quaternary structure, homodimer. Homooligomer. Found in the centralspindlin complex. Interacts with NR1I3. Interacts (Thr-359 phosphorylated form) with PARD6A; the interaction is observed in cancer cells. Interacts (Thr-359 phosphorylated form) with PRKCI; the interaction is observed in cancer cells. Interacts with PKP4; the interaction is observed at the midbody. Interacts with RACGAP1/CYK4; the interaction is direct, occurs in a microtubule-dependent manner, occurs at anaphase and during cytokinesis, is inhibited in metaphase by phosphorylation of ECT2 on Thr-373 and is stimulated in early anaphase by dephosphorylation of ECT2 probably on Thr-373 through CDK1 activity. Interacts with PLK1; the interaction is stimulated upon its phosphorylation on Thr-444. Interacts with RHOA; the interaction results in allosteric activation of ECT2. Interacts with KIF23, PARD3, PARD6B and PRKCQ. Interacts with NEDD9/HEF1. Post-translationally, phosphorylated by PLK1 in vitro. Hyperphosphorylated during the G2 phase of the cell cycle. Phosphorylation at Thr-373 occurs during the G2/M phase, relieves its auto-inhibition status and stimulates its GEF activity. Phosphorylation at Thr-444 in G2/M phase is required for subsequent binding with PLK1 and Rho exchange activation. Dephosphorylated at the time of cytokinesis. Phosphorylation at Thr-359 is required for its transformation activity in cancer cells. As to expression, expressed in lung epithelial cells (at protein level). Expressed in squamous cell carcinoma, primary non-small cell lung cancer tumors and lung adenocarcinoma.

Its subcellular location is the nucleus. It localises to the cytoplasm. The protein resides in the cytoskeleton. It is found in the spindle. The protein localises to the cleavage furrow. Its subcellular location is the midbody. It localises to the cell junction. The protein resides in the tight junction. It is found in the microtubule organizing center. The protein localises to the centrosome. Its activity is regulated as follows. Autoinhibited by the C-terminal PH domain which folds back and binds to the surface of the DH domain, blocking binding of RHOA to the catalytic center of the DH domain. The 2nd BRCT domain is also involved in inhibition, probably by helping to impede RHOA binding. Allosterically activated by binding of activated GTP-bound RHOA to the PH domain which stimulates the release of PH inhibition and promotes the binding of substrate RHOA to the catalytic center. Binding of phosphorylated RACGAP1 to the N-terminal BRCT domain-containing region also releases autoinhibition. Its function is as follows. Guanine nucleotide exchange factor (GEF) that catalyzes the exchange of GDP for GTP. Promotes guanine nucleotide exchange on the Rho family members of small GTPases, like RHOA, RHOC, RAC1 and CDC42. Required for signal transduction pathways involved in the regulation of cytokinesis. Component of the centralspindlin complex that serves as a microtubule-dependent and Rho-mediated signaling required for the myosin contractile ring formation during the cell cycle cytokinesis. Regulates the translocation of RHOA from the central spindle to the equatorial region. Plays a role in the control of mitotic spindle assembly; regulates the activation of CDC42 in metaphase for the process of spindle fibers attachment to kinetochores before chromosome congression. Involved in the regulation of epithelial cell polarity; participates in the formation of epithelial tight junctions in a polarity complex PARD3-PARD6-protein kinase PRKCQ-dependent manner. Plays a role in the regulation of neurite outgrowth. Inhibits phenobarbital (PB)-induced NR1I3 nuclear translocation. Stimulates the activity of RAC1 through its association with the oncogenic PARD6A-PRKCI complex in cancer cells, thereby acting to coordinately drive tumor cell proliferation and invasion. Also stimulates genotoxic stress-induced RHOB activity in breast cancer cells leading to their cell death. This chain is Protein ECT2, found in Homo sapiens (Human).